The following is a 541-amino-acid chain: Chaperonin GroEL (541 aa).

Residues 29–32 (TLGP), 86–90 (DGTTT), glycine 413, 477–479 (DAL), and aspartate 493 contribute to the ATP site.

This sequence belongs to the chaperonin (HSP60) family. Forms a cylinder of 14 subunits composed of two heptameric rings stacked back-to-back. Interacts with the co-chaperonin GroES.

The protein resides in the cytoplasm. The catalysed reaction is ATP + H2O + a folded polypeptide = ADP + phosphate + an unfolded polypeptide.. Together with its co-chaperonin GroES, plays an essential role in assisting protein folding. The GroEL-GroES system forms a nano-cage that allows encapsulation of the non-native substrate proteins and provides a physical environment optimized to promote and accelerate protein folding. In Clostridium botulinum (strain Loch Maree / Type A3), this protein is Chaperonin GroEL.